Reading from the N-terminus, the 147-residue chain is TRAP-T-associated universal stress protein TeaD (147 aa).

Residues Pro-8–Asp-10, Val-38, Gly-117–Asn-122, and Ser-131–Ala-133 contribute to the ATP site.

Belongs to the universal stress protein A family. Homodimer or homotetramer; in equilibrium. The dimer/tetramer ratio is ATP-dependent. ATP stabilizes dimer-dimer complexes, with one ATP molecule bound to each monomer.

It localises to the cytoplasm. Its function is as follows. ATP-binding protein that negatively regulates activity of the tripartite ATP-independent periplasmic (TRAP) ectoine transport system TeaABC. May regulate uptake according to the ATP status of the cell. The protein is TRAP-T-associated universal stress protein TeaD (teaD) of Halomonas elongata (strain ATCC 33173 / DSM 2581 / NBRC 15536 / NCIMB 2198 / 1H9).